A 359-amino-acid polypeptide reads, in one-letter code: Protein mab-21-like 2 (359 aa).

This sequence belongs to the mab-21 family.

The protein resides in the nucleus. It is found in the cytoplasm. Its function is as follows. Required for several aspects of embryonic development including normal development of the eye. The chain is Protein mab-21-like 2 (MAB21L2) from Homo sapiens (Human).